The sequence spans 542 residues: Chaperonin GroEL (542 aa).

Residues 29-32 (TLGP), 86-90 (DGTTT), Gly413, 477-479 (NAA), and Asp493 contribute to the ATP site.

It belongs to the chaperonin (HSP60) family. As to quaternary structure, forms a cylinder of 14 subunits composed of two heptameric rings stacked back-to-back. Interacts with the co-chaperonin GroES.

The protein localises to the cytoplasm. It carries out the reaction ATP + H2O + a folded polypeptide = ADP + phosphate + an unfolded polypeptide.. Functionally, together with its co-chaperonin GroES, plays an essential role in assisting protein folding. The GroEL-GroES system forms a nano-cage that allows encapsulation of the non-native substrate proteins and provides a physical environment optimized to promote and accelerate protein folding. This chain is Chaperonin GroEL, found in Heliobacterium modesticaldum (strain ATCC 51547 / Ice1).